Consider the following 186-residue polypeptide: Orotate phosphoribosyltransferase (186 aa).

Residues Arg96, Lys100, His102, and 121 to 129 each bind 5-phospho-alpha-D-ribose 1-diphosphate; that span reads DDVATTGTS. The orotate site is built by Thr125 and Arg153.

The protein belongs to the purine/pyrimidine phosphoribosyltransferase family. PyrE subfamily. In terms of assembly, homodimer. Requires Mg(2+) as cofactor.

The enzyme catalyses orotidine 5'-phosphate + diphosphate = orotate + 5-phospho-alpha-D-ribose 1-diphosphate. Its pathway is pyrimidine metabolism; UMP biosynthesis via de novo pathway; UMP from orotate: step 1/2. Catalyzes the transfer of a ribosyl phosphate group from 5-phosphoribose 1-diphosphate to orotate, leading to the formation of orotidine monophosphate (OMP). The sequence is that of Orotate phosphoribosyltransferase from Aeropyrum pernix (strain ATCC 700893 / DSM 11879 / JCM 9820 / NBRC 100138 / K1).